The primary structure comprises 141 residues: Sigma factor binding protein 2, chloroplastic (141 aa).

Polar residues predominate over residues 1 to 20 (MDQSSSTLLINQRKSSSSPT). The disordered stretch occupies residues 1-36 (MDQSSSTLLINQRKSSSSPTRIPPKQKRKSTTTHKP). A chloroplast-targeting transit peptide spans 1–38 (MDQSSSTLLINQRKSSSSPTRIPPKQKRKSTTTHKPIK). Residues 13-29 (RKSSSSPTRIPPKQKRK) carry the Bipartite nuclear localization signal motif. Positions 24–36 (PKQKRKSTTTHKP) are enriched in basic residues. The VQ motif lies at 55–64 (FRELVQELTG).

As to quaternary structure, interacts with sigma factors in chloroplast. Interacts with WRKY33 in the nucleus.

The protein localises to the plastid. Its subcellular location is the chloroplast. It localises to the nucleus. Functionally, functions as activator of WRKY33 in plant defense against necrotrophic pathogens by stimulating the DNA-binding activity of WRKY33. In Arabidopsis thaliana (Mouse-ear cress), this protein is Sigma factor binding protein 2, chloroplastic (SIB2).